We begin with the raw amino-acid sequence, 509 residues long: Dihydrolipoyl dehydrogenase, mitochondrial (509 aa).

The transit peptide at 1 to 35 (MQSWSRVYRSLAKKGHFNRISHGLQGVSSVPLRTY) directs the protein to the mitochondrion. At lysine 66 the chain carries N6-acetyllysine; alternate. Lysine 66 carries the post-translational modification N6-succinyllysine; alternate. FAD-binding positions include 71–80 (EKNETLGGTC) and lysine 89. Cysteine 80 and cysteine 85 are disulfide-bonded. Lysine 104, lysine 122, lysine 132, and lysine 143 each carry N6-acetyllysine; alternate. An N6-succinyllysine; alternate mark is found at lysine 104, lysine 122, lysine 132, and lysine 143. Glycine 154 is a binding site for FAD. Residues lysine 159 and lysine 166 each carry the N6-succinyllysine modification. 183–185 (TGS) serves as a coordination point for FAD. Residues 220–227 (GAGVIGVE) and glutamate 243 each bind NAD(+). An N6-succinyllysine mark is found at lysine 273 and lysine 277. Valine 278 is a binding site for NAD(+). 2 positions are modified to phosphoserine: serine 285 and serine 297. Glycine 314 is an NAD(+) binding site. Lysine 334 is subject to N6-acetyllysine; alternate. Residue lysine 334 is modified to N6-succinyllysine; alternate. Lysine 346 is subject to N6-acetyllysine. Residues aspartate 355 and 361–364 (MLAH) contribute to the FAD site. Lysine 410 is modified (N6-acetyllysine; alternate). Lysine 410 carries the N6-succinyllysine; alternate modification. Lysine 417 and lysine 420 each carry N6-acetyllysine. The residue at position 430 (lysine 430) is an N6-succinyllysine. Histidine 487 (proton acceptor) is an active-site residue. Lysine 505 carries the post-translational modification N6-acetyllysine; alternate. The residue at position 505 (lysine 505) is an N6-succinyllysine; alternate.

This sequence belongs to the class-I pyridine nucleotide-disulfide oxidoreductase family. Homodimer. Part of the multimeric pyruvate dehydrogenase complex that contains multiple copies of pyruvate dehydrogenase (subunits PDHA (PDHA1 or PDHA2) and PDHB, E1), dihydrolipoamide acetyltransferase (DLAT, E2) and lipoamide dehydrogenase (DLD, E3). These subunits are bound to an inner core composed of about 48 DLAT and 12 PDHX molecules (by non covalent bonds). The 2-oxoglutarate dehydrogenase complex is composed of OGDH (2-oxoglutarate dehydrogenase; E1), DLST (dihydrolipoamide succinyltransferase; E2), DLD (dihydrolipoamide dehydrogenase; E3) and the assembly factor KGD4. It contains multiple copies of the three enzymatic components (E1, E2 and E3). In the nucleus, the 2-oxoglutarate dehydrogenase complex associates with KAT2A. Interacts with PDHX. FAD is required as a cofactor. Tyrosine phosphorylated. As to expression, expressed in liver (at protein level).

The protein resides in the mitochondrion matrix. It is found in the nucleus. The protein localises to the cell projection. Its subcellular location is the cilium. It localises to the flagellum. The protein resides in the cytoplasmic vesicle. It is found in the secretory vesicle. The protein localises to the acrosome. The enzyme catalyses N(6)-[(R)-dihydrolipoyl]-L-lysyl-[protein] + NAD(+) = N(6)-[(R)-lipoyl]-L-lysyl-[protein] + NADH + H(+). In terms of biological role, lipoamide dehydrogenase is a component of the glycine cleavage system as well as an E3 component of three alpha-ketoacid dehydrogenase complexes (pyruvate-, alpha-ketoglutarate-, and branched-chain amino acid-dehydrogenase complex). The 2-oxoglutarate dehydrogenase complex is mainly active in the mitochondrion. A fraction of the 2-oxoglutarate dehydrogenase complex also localizes in the nucleus and is required for lysine succinylation of histones: associates with KAT2A on chromatin and provides succinyl-CoA to histone succinyltransferase KAT2A. In monomeric form may have additional moonlighting function as serine protease. Involved in the hyperactivation of spermatazoa during capacitation and in the spermatazoal acrosome reaction. This is Dihydrolipoyl dehydrogenase, mitochondrial (Dld) from Mus musculus (Mouse).